The primary structure comprises 136 residues: Organic hydroperoxide resistance protein OhrB (136 aa).

The protein belongs to the OsmC/Ohr family.

Involved in organic hydroperoxide resistance. This chain is Organic hydroperoxide resistance protein OhrB (ohrB), found in Bacillus subtilis (strain 168).